We begin with the raw amino-acid sequence, 309 residues long: Homoserine kinase (309 aa).

P91–C101 contributes to the ATP binding site.

This sequence belongs to the GHMP kinase family. Homoserine kinase subfamily.

The protein localises to the cytoplasm. The enzyme catalyses L-homoserine + ATP = O-phospho-L-homoserine + ADP + H(+). It participates in amino-acid biosynthesis; L-threonine biosynthesis; L-threonine from L-aspartate: step 4/5. Functionally, catalyzes the ATP-dependent phosphorylation of L-homoserine to L-homoserine phosphate. The polypeptide is Homoserine kinase (Cronobacter sakazakii (strain ATCC BAA-894) (Enterobacter sakazakii)).